Reading from the N-terminus, the 354-residue chain is Bergaptol O-methyltransferase (354 aa).

Bergaptol is bound at residue His-121. S-adenosyl-L-homocysteine-binding residues include Ser-174, Gly-198, Asp-221, and Lys-255. His-259 is a binding site for bergaptol. His-259 serves as the catalytic Proton acceptor.

Belongs to the class I-like SAM-binding methyltransferase superfamily. Cation-independent O-methyltransferase family. COMT subfamily.

The catalysed reaction is a 5-hydroxyfurocoumarin + S-adenosyl-L-methionine = a 5-methoxyfurocoumarin + S-adenosyl-L-homocysteine + H(+). It carries out the reaction bergaptol + S-adenosyl-L-methionine = bergapten + S-adenosyl-L-homocysteine. Its activity is regulated as follows. Inhibited by Cu(2+), Ni(2+) and Co(2+). The sequence is that of Bergaptol O-methyltransferase from Ammi majus (Bishop's weed).